A 156-amino-acid chain; its full sequence is Small ribosomal subunit protein uS7 (156 aa).

The protein belongs to the universal ribosomal protein uS7 family. Part of the 30S ribosomal subunit. Contacts proteins S9 and S11.

Functionally, one of the primary rRNA binding proteins, it binds directly to 16S rRNA where it nucleates assembly of the head domain of the 30S subunit. Is located at the subunit interface close to the decoding center, probably blocks exit of the E-site tRNA. This Streptococcus pyogenes serotype M12 (strain MGAS2096) protein is Small ribosomal subunit protein uS7.